Reading from the N-terminus, the 315-residue chain is tRNA-dihydrouridine(16) synthase (315 aa).

Residues 7-9 (PME) and Q68 each bind FMN. The Proton donor role is filled by C98. FMN is bound by residues K139, 199–201 (NGE), and 223–224 (GR).

The protein belongs to the Dus family. DusC subfamily. FMN is required as a cofactor.

The enzyme catalyses 5,6-dihydrouridine(16) in tRNA + NADP(+) = uridine(16) in tRNA + NADPH + H(+). It catalyses the reaction 5,6-dihydrouridine(16) in tRNA + NAD(+) = uridine(16) in tRNA + NADH + H(+). Catalyzes the synthesis of 5,6-dihydrouridine (D), a modified base found in the D-loop of most tRNAs, via the reduction of the C5-C6 double bond in target uridines. Specifically modifies U16 in tRNAs. The chain is tRNA-dihydrouridine(16) synthase from Shewanella oneidensis (strain ATCC 700550 / JCM 31522 / CIP 106686 / LMG 19005 / NCIMB 14063 / MR-1).